The following is a 194-amino-acid chain: Cilia- and flagella-associated protein 107 (194 aa).

2 mn regions span residues 45-60 (TPQS…FPDH) and 95-107 (ISTY…RHGY).

In terms of assembly, microtubule inner protein component of sperm flagellar doublet microtubules. Expressed in airway epithelial cells.

The protein resides in the cytoplasm. It localises to the cytoskeleton. The protein localises to the cilium axoneme. It is found in the flagellum axoneme. Functionally, microtubule inner protein (MIP) part of the dynein-decorated doublet microtubules (DMTs) in cilia axoneme, which is required for motile cilia beating. The chain is Cilia- and flagella-associated protein 107 from Homo sapiens (Human).